Consider the following 1397-residue polypeptide: Protein RhsC (1397 aa).

28 consecutive repeat copies span residues 330-352 (NTQVRSFTYDDKYRGRMVAHRHT), 353-374 (GRPEICYRYDSDGRVTEQLNPA), 375-417 (GLSY…EHAD), 418-438 (GSVTQSQFDAVGRLRAQTDAA), 439-460 (GRTTEYSPDVVTGLITRITTPD), 461-481 (GRASAFYYNHHSQLTSATGPD), 482-502 (GLEIRREYDEWGRLIQETAPD), 503-525 (GDITRYRYDNPHSDLPCATEDAT), 526-546 (GSRKTMTWSRYGQLLSFTDCS), 547-567 (GYVTRYDHDRFGQVTAVHREE), 568-588 (GLSQYRAYDSRGQLIAVKDTQ), 589-609 (GHETRYEYNAAGDLTTVIAPD), 610-629 (GSRNGTQYDAWGKAICTTQG), 630-650 (GLTRSMEYDAAGRVIRLTSEN), 651-671 (GSHTTFRYDVLDRLIQETGFD), 672-691 (GRTQRYHHDLTGKLIRSEDE), 692-711 (GLVTHWHYDEADRLTHRTVN), 712-734 (GETAERWQYDERGWLTDISHISE), 735-758 (GHRVTVHYGYDSKGRLASEHLTVH), 808-828 (GDTPLVEYTRDRLHRETLRSF), 829-850 (GRYELTTAYTPAGQLQSQHLNS), 851-871 (LLSDRDYTWNDNGELIRISSP), 872-894 (RQTRSYSYSTTGRLTGVHTTAAN), 895-930 (LDIRIPYTTDPAGNRLPDPELHPDSALSMWPDNRIA), 931-959 (RDAHYLYRYDRHGRLTEKTDLIPEGVIRT), 960-984 (DDERTHRYHYDSQHRLVHYTRTQYA), 985-1019 (EPLVESRYLYDPLGRRVAKRVWRRERDLTGWMSLS), and 1162-1186 (GTTAWYAEYDEWGNLLNEENPHQLQ). The interval 330–1186 (NTQVRSFTYD…LNEENPHQLQ (857 aa)) is 28 X approximate tandem repeats. The tract at residues 1292–1312 (GGQDQRGESKGDGLWGPGKAS) is disordered.

The protein belongs to the RHS family.

Functionally, rhs elements have a nonessential function. They may play an important role in the natural ecology of the cell. This is Protein RhsC (rhsC) from Escherichia coli (strain K12).